The following is a 187-amino-acid chain: Protein GrpE (187 aa).

Residues 1 to 30 (MEKKETKNETEKTNKQDNKNTKSQKKENLN) are disordered.

This sequence belongs to the GrpE family. Homodimer.

The protein resides in the cytoplasm. Participates actively in the response to hyperosmotic and heat shock by preventing the aggregation of stress-denatured proteins, in association with DnaK and GrpE. It is the nucleotide exchange factor for DnaK and may function as a thermosensor. Unfolded proteins bind initially to DnaJ; upon interaction with the DnaJ-bound protein, DnaK hydrolyzes its bound ATP, resulting in the formation of a stable complex. GrpE releases ADP from DnaK; ATP binding to DnaK triggers the release of the substrate protein, thus completing the reaction cycle. Several rounds of ATP-dependent interactions between DnaJ, DnaK and GrpE are required for fully efficient folding. This Borreliella afzelii (strain PKo) (Borrelia afzelii) protein is Protein GrpE.